A 92-amino-acid polypeptide reads, in one-letter code: Serine rich endogenous peptide 11 (92 aa).

A signal peptide spans 1-29; the sequence is MENNTFSSKSINLLILLLLLCTFLCQTES. Positions 50 to 92 are disordered; sequence PNTDIGTPSSTSDRGGGGNGRRLMSQMDVGASSSGQGGGRNRH. Positions 53–62 are enriched in polar residues; sequence DIGTPSSTSD. 2 short sequence motifs (SCOOP motif) span residues 53–67 and 75–89; these read DIGT…GGGG and QMDV…GGGR. 2 short sequence motifs (sxS motif essential for MIK2 binding) span residues 59–61 and 81–83; these read STS and SSS.

Belongs to the serine rich endogenous peptide (SCOOP) phytocytokine family. In terms of assembly, interacts with MIK2 (via extracellular leucine-rich repeat domain); this interaction triggers the formation of complex between MIK2 and the BAK1/SERK3 and SERK4 coreceptors, and subsequent BAK1 activation by phosphorylation. Mostly expressed in seedlings shoots and roots, and, to a lower extent, in leaves.

The protein resides in the cell membrane. Its subcellular location is the secreted. It localises to the extracellular space. It is found in the apoplast. In terms of biological role, brassicaceae-specific phytocytokine (plant endogenous peptide released into the apoplast) perceived by MIK2 in a BAK1/SERK3 and SERK4 coreceptors-dependent manner, that modulates various physiological and antimicrobial processes including growth prevention and reactive oxygen species (ROS) response regulation. This Arabidopsis thaliana (Mouse-ear cress) protein is Serine rich endogenous peptide 11.